A 113-amino-acid chain; its full sequence is Class I hydrophobin POH3 (113 aa).

Positions methionine 1 to alanine 21 are cleaved as a signal peptide. Intrachain disulfides connect cysteine 32/cysteine 92, cysteine 39/cysteine 86, cysteine 40/cysteine 73, and cysteine 93/cysteine 106. A glycan (N-linked (GlcNAc...) asparagine) is linked at asparagine 110.

The protein belongs to the fungal hydrophobin family. In terms of assembly, self-assembles to form functional amyloid fibrils called rodlets. Self-assembly into fibrillar rodlets occurs spontaneously at hydrophobic:hydrophilic interfaces and the rodlets further associate laterally to form amphipathic monolayers. As to expression, expressionn is switched off in the fruiting bodies but abundantly expressed in the vegetative mycelium of both monokaryon and dikaryon.

Its subcellular location is the secreted. The protein localises to the cell wall. Its function is as follows. Aerial growth, conidiation, and dispersal of filamentous fungi in the environment rely upon a capability of their secreting small amphipathic proteins called hydrophobins (HPBs) with low sequence identity. Class I can self-assemble into an outermost layer of rodlet bundles on aerial cell surfaces, conferring cellular hydrophobicity that supports fungal growth, development and dispersal; whereas Class II form highly ordered films at water-air interfaces through intermolecular interactions but contribute nothing to the rodlet structure. POH3 is a class I hydrophobin that causes a large drop in the water-surface tension, enabling hyphae to breach the interface and grow into the air, in both the primary and the secondary mycelium. In the latter mycelium POH3 maight also play a role in the emergence of fruiting bodies. Secreted POH3 could also play a role in facilitating lignin degradation. The sequence is that of Class I hydrophobin POH3 from Pleurotus ostreatus (Oyster mushroom).